Consider the following 37-residue polypeptide: Somatostatin-37 (37 aa).

A propeptide spanning residues 1 to 2 (AL) is cleaved from the precursor. Cysteine 26 and cysteine 37 are joined by a disulfide.

This sequence belongs to the somatostatin family.

It is found in the secreted. In terms of biological role, somatostatin inhibits the release of somatotropin. This Petromyzon marinus (Sea lamprey) protein is Somatostatin-37 (sst).